A 395-amino-acid chain; its full sequence is NAD(P)H-quinone oxidoreductase subunit H (395 aa).

Belongs to the complex I 49 kDa subunit family. In terms of assembly, NDH-1 can be composed of about 15 different subunits; different subcomplexes with different compositions have been identified which probably have different functions.

It is found in the cellular thylakoid membrane. It catalyses the reaction a plastoquinone + NADH + (n+1) H(+)(in) = a plastoquinol + NAD(+) + n H(+)(out). It carries out the reaction a plastoquinone + NADPH + (n+1) H(+)(in) = a plastoquinol + NADP(+) + n H(+)(out). In terms of biological role, NDH-1 shuttles electrons from an unknown electron donor, via FMN and iron-sulfur (Fe-S) centers, to quinones in the respiratory and/or the photosynthetic chain. The immediate electron acceptor for the enzyme in this species is believed to be plastoquinone. Couples the redox reaction to proton translocation, and thus conserves the redox energy in a proton gradient. Cyanobacterial NDH-1 also plays a role in inorganic carbon-concentration. The protein is NAD(P)H-quinone oxidoreductase subunit H of Prochlorococcus marinus (strain MIT 9312).